A 484-amino-acid polypeptide reads, in one-letter code: Dynein regulatory complex subunit 2 (484 aa).

Coiled coils occupy residues 92 to 160 (VDCK…RKTI) and 374 to 403 (KEQE…GMEN).

The protein belongs to the DRC2 family. As to quaternary structure, component of the nexin-dynein regulatory complex (N-DRC). Interacts with DRC1.

It is found in the cytoplasm. Its subcellular location is the cytoskeleton. The protein localises to the flagellum basal body. It localises to the cell projection. The protein resides in the cilium. It is found in the flagellum. Its subcellular location is the flagellum axoneme. In terms of biological role, component of the nexin-dynein regulatory complex (N-DRC), a key regulator of ciliary/flagellar motility which maintains the alignment and integrity of the distal axoneme and regulates microtubule sliding in motile axonemes. Plays a critical role in the assembly of N-DRC and also stabilizes the assembly of multiple inner dynein arms and radial spokes. Coassembles with DRC1 to form a central scaffold needed for assembly of the N-DRC and its attachment to the outer doublet microtubules. This chain is Dynein regulatory complex subunit 2 (CCDC65), found in Macaca fascicularis (Crab-eating macaque).